Consider the following 782-residue polypeptide: Coiled-coil alpha-helical rod protein 1 (782 aa).

Basic and acidic residues-rich tracts occupy residues 62 to 74 (ERDVSSDRQEPGR) and 208 to 218 (ETRRAGEAKEL). 2 disordered regions span residues 62–82 (ERDVSSDRQEPGRRGRSWGLE) and 182–218 (LTQAHEEALSSLTSKAEGLEKSLSSLETRRAGEAKEL). Coiled-coil stretches lie at residues 82 to 314 (EGSQ…ELTR), 344 to 437 (LMVQ…NAVS), and 498 to 691 (VADV…QQEG).

The protein resides in the cytoplasm. The protein localises to the nucleus. Functionally, may be a regulator of keratinocyte proliferation or differentiation. The chain is Coiled-coil alpha-helical rod protein 1 (CCHCR1) from Pan paniscus (Pygmy chimpanzee).